The sequence spans 375 residues: Queuine tRNA-ribosyltransferase (375 aa).

Catalysis depends on aspartate 89, which acts as the Proton acceptor. Substrate-binding positions include 89–93, aspartate 143, glutamine 187, and glycine 214; that span reads DSGGF. The segment at 245 to 251 is RNA binding; that stretch reads GVGKPED. Residue aspartate 264 is the Nucleophile of the active site. Residues 269 to 273 are RNA binding; important for wobble base 34 recognition; the sequence is TRNAR. Zn(2+)-binding residues include cysteine 302, cysteine 304, cysteine 307, and histidine 333.

The protein belongs to the queuine tRNA-ribosyltransferase family. Homodimer. Within each dimer, one monomer is responsible for RNA recognition and catalysis, while the other monomer binds to the replacement base PreQ1. The cofactor is Zn(2+).

It catalyses the reaction 7-aminomethyl-7-carbaguanine + guanosine(34) in tRNA = 7-aminomethyl-7-carbaguanosine(34) in tRNA + guanine. Its pathway is tRNA modification; tRNA-queuosine biosynthesis. Its function is as follows. Catalyzes the base-exchange of a guanine (G) residue with the queuine precursor 7-aminomethyl-7-deazaguanine (PreQ1) at position 34 (anticodon wobble position) in tRNAs with GU(N) anticodons (tRNA-Asp, -Asn, -His and -Tyr). Catalysis occurs through a double-displacement mechanism. The nucleophile active site attacks the C1' of nucleotide 34 to detach the guanine base from the RNA, forming a covalent enzyme-RNA intermediate. The proton acceptor active site deprotonates the incoming PreQ1, allowing a nucleophilic attack on the C1' of the ribose to form the product. After dissociation, two additional enzymatic reactions on the tRNA convert PreQ1 to queuine (Q), resulting in the hypermodified nucleoside queuosine (7-(((4,5-cis-dihydroxy-2-cyclopenten-1-yl)amino)methyl)-7-deazaguanosine). The protein is Queuine tRNA-ribosyltransferase of Aliivibrio fischeri (strain ATCC 700601 / ES114) (Vibrio fischeri).